A 357-amino-acid chain; its full sequence is GPI mannosyltransferase 2 (357 aa).

A run of 8 helical transmembrane segments spans residues 6 to 26 (TLIVVFVAIKAYLVALALVVP), 86 to 106 (AIAYTAIAVSSLSHLLAALML), 128 to 148 (ILSPAGIFLVAGYTESLFALL), 167 to 187 (VLGASCLLRGNGLLWGIPFLF), 201 to 221 (GVSVVIGGSLVGAVFLYTQYL), 257 to 277 (YWTANNIPNFLFAAPVLYLMY), 286 to 306 (LVPFYTVHAIMGLACVFMWHV), and 334 to 354 (YVVRYIFVWITFQVVMWGAYL).

The protein belongs to the PIGV family.

It is found in the endoplasmic reticulum membrane. It functions in the pathway glycolipid biosynthesis; glycosylphosphatidylinositol-anchor biosynthesis. Functionally, mannosyltransferase involved in glycosylphosphatidylinositol-anchor biosynthesis. Transfers the second mannose to the glycosylphosphatidylinositol during GPI precursor assembly. In Yarrowia lipolytica (strain CLIB 122 / E 150) (Yeast), this protein is GPI mannosyltransferase 2 (GPI18).